A 577-amino-acid polypeptide reads, in one-letter code: MRMKDLYAPTLKETPSDVETVSHEYLLRGGFIRKVAAGIYTYLPLGRRVLLKIENIVREEMNRIGAQEILMPILQPAELWKQSGRWDDYGPEMMKLKDRHERDFTLGPTHEEIVTDLVKNELRSYKQLPLTLYQIANKYRDEIRPRFGLLRAREFIMKDAYSFHASWESLDETYEQFKKAYSRIMERLGVRYMIIEAETGAIGGNASHEFVVPAKIGETNVLFCEKCGYQASDEKAEYKGEYTQEQEEEKPLKKVPTPGVKTIEEVSEFLGVPPSKIVKSLLYKGREGYVMVLIRGDLELNEAKLKAHLKDQSLRMATPEEILKDFGVPVGFIGPIGVDVKKVADHSVRGLKNFVVGGMEEDTHYVNANHPRDFKVDEWYDLRTVVEGDPCPVCGEPLKATKGIELGHIFKLGTKYSEAMKAYFMDENGEMKPFIMGCYGWGVSRTMAAVVEHFHDENGMIWPLSIAPYTVVVDILNMNDAEQKQVGEKIYQVLSEKGEEVVLDDREVSPGFKFKDADLIGFPIRINVGRSLKEGVVELKKRYSKELVKVNIKNGFGALLETLEKMKREYDPKEAVR.

Belongs to the class-II aminoacyl-tRNA synthetase family. ProS type 1 subfamily. In terms of assembly, homodimer.

The protein localises to the cytoplasm. It carries out the reaction tRNA(Pro) + L-proline + ATP = L-prolyl-tRNA(Pro) + AMP + diphosphate. In terms of biological role, catalyzes the attachment of proline to tRNA(Pro) in a two-step reaction: proline is first activated by ATP to form Pro-AMP and then transferred to the acceptor end of tRNA(Pro). As ProRS can inadvertently accommodate and process non-cognate amino acids such as alanine and cysteine, to avoid such errors it has two additional distinct editing activities against alanine. One activity is designated as 'pretransfer' editing and involves the tRNA(Pro)-independent hydrolysis of activated Ala-AMP. The other activity is designated 'posttransfer' editing and involves deacylation of mischarged Ala-tRNA(Pro). The misacylated Cys-tRNA(Pro) is not edited by ProRS. In Thermotoga maritima (strain ATCC 43589 / DSM 3109 / JCM 10099 / NBRC 100826 / MSB8), this protein is Proline--tRNA ligase.